The sequence spans 515 residues: Cell division control protein 6 homolog (515 aa).

Over residues 1–24 (MPTLRSATASASTAGTASPTAIAT) the composition is skewed to low complexity. The segment at 1-70 (MPTLRSATAS…TPKLLSASPR (70 aa)) is disordered. Residues 43–52 (DASQFTSPHK) show a composition bias toward polar residues.

It belongs to the CDC6/cdc18 family.

The protein localises to the nucleus. May be involved in the initiation of DNA replication. This is Cell division control protein 6 homolog from Oryza sativa subsp. japonica (Rice).